The chain runs to 282 residues: Undecaprenyl-diphosphatase (282 aa).

7 consecutive transmembrane segments (helical) span residues Met-1–Val-21, Gly-40–Tyr-60, Ala-85–Phe-105, Tyr-117–Val-137, Phe-196–Thr-216, Ala-229–Ile-249, and Ser-258–Gly-278.

This sequence belongs to the UppP family.

The protein localises to the cell inner membrane. The catalysed reaction is di-trans,octa-cis-undecaprenyl diphosphate + H2O = di-trans,octa-cis-undecaprenyl phosphate + phosphate + H(+). Catalyzes the dephosphorylation of undecaprenyl diphosphate (UPP). Confers resistance to bacitracin. The sequence is that of Undecaprenyl-diphosphatase from Chlorobium phaeobacteroides (strain DSM 266 / SMG 266 / 2430).